Here is a 207-residue protein sequence, read N- to C-terminus: MANVKLFDQTGKEAGEVVLNDAIFGIEPNESVVFDVIISQRASLRQGTHAVKNRSAVSGGGRKPWRQKGTGRARQGSIRSPQWRGGGVVFGPTPRSYAYKLPRKVRRLALKSVYSEKVAENKFVAVDSLSFTAPKTAEFAKVLAALSIDTKVLVILEEGNEFAALSARNLPNVKVATATTASVLDIVNSDKLLVTQAAISKIEEVLA.

Residues 49-78 are disordered; sequence HAVKNRSAVSGGGRKPWRQKGTGRARQGSI.

Belongs to the universal ribosomal protein uL4 family. In terms of assembly, part of the 50S ribosomal subunit.

In terms of biological role, one of the primary rRNA binding proteins, this protein initially binds near the 5'-end of the 23S rRNA. It is important during the early stages of 50S assembly. It makes multiple contacts with different domains of the 23S rRNA in the assembled 50S subunit and ribosome. Its function is as follows. Forms part of the polypeptide exit tunnel. This is Large ribosomal subunit protein uL4 from Streptococcus gordonii (strain Challis / ATCC 35105 / BCRC 15272 / CH1 / DL1 / V288).